The following is a 179-amino-acid chain: MIFYLHGFDATSPGNHEKMRQLQFIDPDVRLVSYSTLHPKHDMQHLLKEVAKQMKHSDDPAPLMVGVGLGAYWAERIGFLNGLKSVLINPNLHPEDNMQGKIDRPEEYADIANKCVSQFREKNTHKAMCIFSVNDEMFDNQQLASELSAYYSIDWDDVQPHKFPQLAAHLPKIKAFKLA.

This sequence belongs to the UPF0227 family.

The sequence is that of UPF0227 protein Sbal195_2522 from Shewanella baltica (strain OS195).